The primary structure comprises 108 residues: uncharacterized protein (108 aa).

This is an uncharacterized protein from Treponema pallidum (strain Nichols).